Here is a 470-residue protein sequence, read N- to C-terminus: Uronate isomerase (470 aa).

This sequence belongs to the metallo-dependent hydrolases superfamily. Uronate isomerase family.

The enzyme catalyses D-glucuronate = D-fructuronate. The catalysed reaction is aldehydo-D-galacturonate = keto-D-tagaturonate. It functions in the pathway carbohydrate metabolism; pentose and glucuronate interconversion. The chain is Uronate isomerase from Cutibacterium acnes (strain DSM 16379 / KPA171202) (Propionibacterium acnes).